The sequence spans 138 residues: Large ribosomal subunit protein uL16 (138 aa).

Basic residues predominate over residues 1-13; the sequence is MLQPKRRKYRKEQ. A disordered region spans residues 1-24; that stretch reads MLQPKRRKYRKEQKGRNTGKATRG.

It belongs to the universal ribosomal protein uL16 family. In terms of assembly, part of the 50S ribosomal subunit.

Binds 23S rRNA and is also seen to make contacts with the A and possibly P site tRNAs. The protein is Large ribosomal subunit protein uL16 of Burkholderia multivorans (strain ATCC 17616 / 249).